Reading from the N-terminus, the 349-residue chain is Rhodopsin (349 aa).

Residues 1–33 lie on the Extracellular side of the membrane; the sequence is TEGPYFYIPMSNATGVVRSPYEYPQYYLVYPAA. Asn12 is a glycosylation site (N-linked (GlcNAc...) asparagine). A helical transmembrane segment spans residues 34-58; it reads FAVLGAYMFFLIIFGFPVNFLTLYV. Residues 59–70 lie on the Cytoplasmic side of the membrane; sequence TIEHKKLRTPLN. Residues 71–93 form a helical membrane-spanning segment; sequence YILLNLAVADLFMVIGGFTTTIY. Residues 94-107 lie on the Extracellular side of the membrane; the sequence is TSMHGYFVLGRLGC. The cysteines at positions 107 and 184 are disulfide-linked. The helical transmembrane segment at 108 to 130 threads the bilayer; the sequence is NLEGFSATLGGMISLWSLVVLAV. The short motif at 131 to 133 is the 'Ionic lock' involved in activated form stabilization element; sequence ERW. The Cytoplasmic segment spans residues 131-149; sequence ERWVVVCKPMSNFRFGENH. Residues 150–170 form a helical membrane-spanning segment; it reads AIMGVTLTWAMGLACTVPPLV. At 171 to 199 the chain is on the extracellular side; the sequence is GWSRYIPEGMQCSCGIDYYTRAEGFNNES. The N-linked (GlcNAc...) asparagine glycan is linked to Asn197. Residues 200–221 traverse the membrane as a helical segment; it reads FVLYMFVCHFSFPLVVIFFCYG. Topologically, residues 222–249 are cytoplasmic; sequence RLLCAVKEAAAAQQESETTQRAEREVTR. Residues 250–271 form a helical membrane-spanning segment; that stretch reads MVILMVIGFLVCWLPYASVAWY. Over 272 to 283 the chain is Extracellular; sequence IFTHQGSEFGPL. A helical transmembrane segment spans residues 284-305; the sequence is FMTIPAFFAKSSAIYNPVIYIC. Position 293 is an N6-(retinylidene)lysine (Lys293). Residues 306–349 are Cytoplasmic-facing; it reads LNKQFRQCMLTTLFCGKNPFEEEEGASSTKTEASSASSSSVSPA. Cys320 is lipidated: S-palmitoyl cysteine. Residues 326-349 are disordered; it reads EEEEGASSTKTEASSASSSSVSPA. Low complexity predominate over residues 331-349; the sequence is ASSTKTEASSASSSSVSPA.

The protein belongs to the G-protein coupled receptor 1 family. Opsin subfamily. In terms of processing, phosphorylated on some or all of the serine and threonine residues present in the C-terminal region. Contains one covalently linked retinal chromophore.

The protein resides in the membrane. It localises to the cell projection. It is found in the cilium. The protein localises to the photoreceptor outer segment. Photoreceptor required for image-forming vision at low light intensity. While most salt water fish species use retinal as chromophore, most freshwater fish use 3-dehydroretinal, or a mixture of retinal and 3-dehydroretinal. Light-induced isomerization of 11-cis to all-trans retinal triggers a conformational change that activates signaling via G-proteins. Subsequent receptor phosphorylation mediates displacement of the bound G-protein alpha subunit by arrestin and terminates signaling. This is Rhodopsin (rho) from Myripristis berndti (Bigscale soldierfish).